Consider the following 173-residue polypeptide: MENIIARRYAKAIASRADINDFYQNLCILNSAFVLPKFKNIIESNEIKKERKMEFLDSFFDIKNSSFQNFLRLLIENSRLEYIPQIVKELERQKAFKENIFVGIVYSKEKLSQENLKDLEVKLNKKFDANIKLNNKISQDDSVKIELEELGYELSFSMKALQNKLNEYILKII.

Belongs to the ATPase delta chain family. F-type ATPases have 2 components, F(1) - the catalytic core - and F(0) - the membrane proton channel. F(1) has five subunits: alpha(3), beta(3), gamma(1), delta(1), epsilon(1). F(0) has three main subunits: a(1), b(2) and c(10-14). The alpha and beta chains form an alternating ring which encloses part of the gamma chain. F(1) is attached to F(0) by a central stalk formed by the gamma and epsilon chains, while a peripheral stalk is formed by the delta and b chains.

The protein localises to the cell inner membrane. In terms of biological role, f(1)F(0) ATP synthase produces ATP from ADP in the presence of a proton or sodium gradient. F-type ATPases consist of two structural domains, F(1) containing the extramembraneous catalytic core and F(0) containing the membrane proton channel, linked together by a central stalk and a peripheral stalk. During catalysis, ATP synthesis in the catalytic domain of F(1) is coupled via a rotary mechanism of the central stalk subunits to proton translocation. Functionally, this protein is part of the stalk that links CF(0) to CF(1). It either transmits conformational changes from CF(0) to CF(1) or is implicated in proton conduction. In Campylobacter jejuni subsp. jejuni serotype O:6 (strain 81116 / NCTC 11828), this protein is ATP synthase subunit delta.